We begin with the raw amino-acid sequence, 769 residues long: P-selectin (769 aa).

The N-terminal stretch at 1–32 (MASCPKAIWSWRFQRVVFRSVQLLCFSILIFE) is a signal peptide. Over 33 to 717 (LMTQKEVSAW…QEALTYIGGA (685 aa)) the chain is Extracellular. 2 N-linked (GlcNAc...) asparagine glycosylation sites follow: Asn-54 and Asn-80. Residues 58–158 (AFCQKYYTDL…PCGKRKRALC (101 aa)) enclose the C-type lectin domain. Intrachain disulfides connect Cys-60-Cys-158, Cys-131-Cys-150, Cys-163-Cys-174, Cys-168-Cys-183, Cys-185-Cys-194, Cys-200-Cys-244, Cys-230-Cys-257, Cys-262-Cys-306, Cys-292-Cys-319, Cys-324-Cys-368, Cys-354-Cys-381, Cys-386-Cys-430, Cys-416-Cys-443, Cys-448-Cys-492, Cys-478-Cys-505, Cys-510-Cys-554, Cys-540-Cys-567, Cys-581-Cys-625, Cys-611-Cys-638, Cys-643-Cys-687, and Cys-673-Cys-700. Ca(2+) contacts are provided by Glu-121, Asn-123, and Asn-124. Asn-123 lines the a carbohydrate pocket. Glu-133 and Asn-146 together coordinate a carbohydrate. The Ca(2+) site is built by Asn-146 and Asp-147. Residues 159-195 (YRASCQDMSCSKQGECIETIGNYTCSCYPGFYGPECE) enclose the EGF-like domain. Asn-180 is a glycosylation site (N-linked (GlcNAc...) asparagine). Sushi domains lie at 198-259 (RECG…QCVA), 260-321 (VQCP…VCKA), 322-383 (IACE…VCQA), 384-445 (LQCQ…ECQA), 446-507 (VTCA…TCEA), 508-569 (SKCP…SCKV), 579-640 (LRCP…TCRA), and 641-702 (VKCS…TCQA). N-linked (GlcNAc...) asparagine glycans are attached at residues Asn-212 and Asn-219. N-linked (GlcNAc...) asparagine glycosylation is present at Asn-347. Residue Asn-398 is glycosylated (N-linked (GlcNAc...) asparagine). Asn-604 is a glycosylation site (N-linked (GlcNAc...) asparagine). 3 N-linked (GlcNAc...) asparagine glycosylation sites follow: Asn-655, Asn-662, and Asn-680. A helical membrane pass occupies residues 718–734 (AAGTTGLVTSSILLALL). Residues 735-769 (RRRRRQKDDGKSPLNPQSHLGTYGVFTNAAFDPSP) are Cytoplasmic-facing. The segment at 740–769 (QKDDGKSPLNPQSHLGTYGVFTNAAFDPSP) is disordered. The short motif at 757 to 760 (YGVF) is the Endocytosis signal element. Residues 760-769 (FTNAAFDPSP) are interaction with SNX17.

Belongs to the selectin/LECAM family. In terms of assembly, interacts with SNX17. Interacts with SELPLG/PSGL1 and PODXL2 and mediates neutrophil adhesion and leukocyte rolling. This interaction requires the sialyl-Lewis X epitope of SELPLG and PODXL2, and specific tyrosine sulfation on SELPLG. Interacts (via C-type lectin domain) with alpha-IIb/beta3 integrin ITGA2B:ITGB3 and alpha-V/beta-3 integrin ITGAV:ITGB3. Interacts with alpha5/beta1 integrin ITGA5:ITGB1 and alpha4/beta1 integrin ITGA4:ITGB.

The protein resides in the cell membrane. Functionally, ca(2+)-dependent receptor for myeloid cells that binds to carbohydrates on neutrophils and monocytes. Mediates the interaction of activated endothelial cells or platelets with leukocytes. The ligand recognized is sialyl-Lewis X. Mediates rapid rolling of leukocyte rolling over vascular surfaces during the initial steps in inflammation through interaction with SELPLG. Mediates cell-cell interactions and cell adhesion via the interaction with integrin alpha-IIb/beta3 (ITGA2B:ITGB3) and integrin alpha-V/beta-3 (ITGAV:ITGB3). In Ovis aries (Sheep), this protein is P-selectin (SELP).